Here is a 374-residue protein sequence, read N- to C-terminus: Ribosomal RNA large subunit methyltransferase G (374 aa).

Belongs to the methyltransferase superfamily. RlmG family.

The protein resides in the cytoplasm. The catalysed reaction is guanosine(1835) in 23S rRNA + S-adenosyl-L-methionine = N(2)-methylguanosine(1835) in 23S rRNA + S-adenosyl-L-homocysteine + H(+). Functionally, specifically methylates the guanine in position 1835 (m2G1835) of 23S rRNA. The polypeptide is Ribosomal RNA large subunit methyltransferase G (Pseudomonas aeruginosa (strain UCBPP-PA14)).